Here is a 463-residue protein sequence, read N- to C-terminus: L-seryl-tRNA(Sec) selenium transferase (463 aa).

Lysine 295 bears the N6-(pyridoxal phosphate)lysine mark.

This sequence belongs to the SelA family. Homodecamer; pentamer of dimers. Binds only one seryl-tRNA(Sec) per dimer. The cofactor is pyridoxal 5'-phosphate.

It localises to the cytoplasm. It catalyses the reaction L-seryl-tRNA(Sec) + selenophosphate + H(+) = L-selenocysteinyl-tRNA(Sec) + phosphate. Its pathway is aminoacyl-tRNA biosynthesis; selenocysteinyl-tRNA(Sec) biosynthesis; selenocysteinyl-tRNA(Sec) from L-seryl-tRNA(Sec) (bacterial route): step 1/1. Functionally, converts seryl-tRNA(Sec) to selenocysteinyl-tRNA(Sec) required for selenoprotein biosynthesis. The chain is L-seryl-tRNA(Sec) selenium transferase from Escherichia coli O45:K1 (strain S88 / ExPEC).